The primary structure comprises 166 residues: Interferon gamma (166 aa).

A signal peptide spans 1–23 (MKYTSYFLALLLCVLLGFSGSYG). At glutamine 24 the chain carries Pyrrolidone carboxylic acid. Residues asparagine 39 and asparagine 106 are each glycosylated (N-linked (GlcNAc...) asparagine).

The protein belongs to the type II (or gamma) interferon family. In terms of assembly, homodimer. Interacts with IFNGR1 (via extracellular domain); this interaction promotes IFNGR1 dimerization. As to expression, released primarily from activated T lymphocytes.

Its subcellular location is the secreted. Type II interferon produced by immune cells such as T-cells and NK cells that plays crucial roles in antimicrobial, antiviral, and antitumor responses by activating effector immune cells and enhancing antigen presentation. Primarily signals through the JAK-STAT pathway after interaction with its receptor IFNGR1 to affect gene regulation. Upon IFNG binding, IFNGR1 intracellular domain opens out to allow association of downstream signaling components JAK2, JAK1 and STAT1, leading to STAT1 activation, nuclear translocation and transcription of IFNG-regulated genes. Many of the induced genes are transcription factors such as IRF1 that are able to further drive regulation of a next wave of transcription. Plays a role in class I antigen presentation pathway by inducing a replacement of catalytic proteasome subunits with immunoproteasome subunits. In turn, increases the quantity, quality, and repertoire of peptides for class I MHC loading. Increases the efficiency of peptide generation also by inducing the expression of activator PA28 that associates with the proteasome and alters its proteolytic cleavage preference. Up-regulates as well MHC II complexes on the cell surface by promoting expression of several key molecules such as cathepsins B/CTSB, H/CTSH, and L/CTSL. Participates in the regulation of hematopoietic stem cells during development and under homeostatic conditions by affecting their development, quiescence, and differentiation. The protein is Interferon gamma (IFNG) of Bos indicus (Zebu).